The following is a 557-amino-acid chain: MNLDNAKCFKQRVFIGNLTSEHLNKTVTIAGWVKRIKKLGELNFVIVGDKTNTIQVTCKNKEQVKYLTREDLVIVKGKLKRLDSVRFEITNPTITLFAKSKTPPLIIEDKTDALEEVRLRYRYLDLRRPVMQKRLALRHKVTLAVRNWLDQMGFIEVETPTLTKSTPEGARDFLVPARIREHSFYALPQSPQIYKQLLMVGGTEKYFQIAHVYRDEDSRKDRQPEHTQIDLEVAFYTKEMVMDLIQRLFVDVFRQVLNIKLKKPFPVLKFAEAFNRFGSDKPDLRYGFELEDCTDLFQDSPNQFTNLINAGGIVGGIQLPNLYLDEVSFKALRKLAKDNGVSLEFYSDKASSLKQPLDLPLAGTILLVAHKSKTQAWTALGAIRNELKYHLNLVKPNQYSFCWIVDFPLYEFDEKEQKWVSAHNMFSNPQPQWLVNFENHKAEALSEQYDLVLNGFELGSGSIRIHDPEVQTRLMQSLGVDPQQFGFVMEAYQYGAPVHAGMGLGLDRLMMIINNVDNIREVMAFPKNAQGIEMHTNAPDQVDIKDITTIWSKHPVK.

Residue Glu-168 coordinates L-aspartate. Positions 192-195 (QIYK) are aspartate. Arg-214 serves as a coordination point for L-aspartate. Residues 214–216 (RDE) and Gln-223 each bind ATP. Position 423 (His-423) interacts with L-aspartate. Glu-457 provides a ligand contact to ATP. Residue Arg-464 coordinates L-aspartate. Residue 505–508 (GLDR) participates in ATP binding.

It belongs to the class-II aminoacyl-tRNA synthetase family. Type 1 subfamily. As to quaternary structure, homodimer.

It is found in the cytoplasm. The enzyme catalyses tRNA(Asp) + L-aspartate + ATP = L-aspartyl-tRNA(Asp) + AMP + diphosphate. In terms of biological role, catalyzes the attachment of L-aspartate to tRNA(Asp) in a two-step reaction: L-aspartate is first activated by ATP to form Asp-AMP and then transferred to the acceptor end of tRNA(Asp). The protein is Aspartate--tRNA ligase of Mycoplasma pneumoniae (strain ATCC 29342 / M129 / Subtype 1) (Mycoplasmoides pneumoniae).